The following is a 458-amino-acid chain: uncharacterized protein (458 aa).

Disordered stretches follow at residues 339 to 397 (GTGY…ARIL) and 434 to 458 (YNSE…EDDC). 2 stretches are compositionally biased toward acidic residues: residues 344 to 390 (SDSD…EEEP) and 436 to 458 (SEDE…EDDC).

This is an uncharacterized protein from Invertebrate iridescent virus 3 (IIV-3).